A 306-amino-acid chain; its full sequence is uncharacterized protein (306 aa).

Helical transmembrane passes span 6 to 26 (LLGF…PIAL), 35 to 55 (AQTI…ALLA), 69 to 89 (YAWI…LFSS), 98 to 118 (VAQI…VLIF), 122 to 142 (LGLH…LFFN), 154 to 174 (YSTG…YGMA), 186 to 206 (QILL…ADFS), 211 to 231 (LTPL…IGYG), 247 to 267 (VVIT…HYFS), and 281 to 301 (YIGA…HKLL). 2 consecutive EamA domains span residues 17–142 (MAWG…LFFN) and 166–296 (LIWV…LSAI).

Belongs to the EamA transporter family.

Its subcellular location is the cell membrane. This is an uncharacterized protein from Haemophilus influenzae (strain ATCC 51907 / DSM 11121 / KW20 / Rd).